A 466-amino-acid chain; its full sequence is Cysteine--tRNA ligase (466 aa).

Cys28 contributes to the Zn(2+) binding site. A 'HIGH' region motif is present at residues 30–40 (PTVYNYIHIGN). Cys208, His233, and Glu237 together coordinate Zn(2+). Positions 265-269 (KMSKS) match the 'KMSKS' region motif. Residue Lys268 participates in ATP binding.

Belongs to the class-I aminoacyl-tRNA synthetase family. In terms of assembly, monomer. Requires Zn(2+) as cofactor.

It is found in the cytoplasm. The enzyme catalyses tRNA(Cys) + L-cysteine + ATP = L-cysteinyl-tRNA(Cys) + AMP + diphosphate. The protein is Cysteine--tRNA ligase of Staphylococcus saprophyticus subsp. saprophyticus (strain ATCC 15305 / DSM 20229 / NCIMB 8711 / NCTC 7292 / S-41).